The sequence spans 795 residues: Protein Jade-3 (795 aa).

Low complexity predominate over residues 1–25; that stretch reads MKRLRTPSSSDSSDNESPSTSFSSN. A disordered region spans residues 1-41; sequence MKRLRTPSSSDSSDNESPSTSFSSNKYGSKPGTPASAQKKP. A PHD-type 1 zinc finger spans residues 201–251; sequence DVICDVCRSPDSEEGNDMVFCDKCNICVHQACYGIVKVPDGNWLCRTCVLG. The C2HC pre-PHD-type zinc-finger motif lies at 253–287; sequence TPQCLLCPKTGGAMKATRAGTKWAHVSCALWIPEV. Residues 311 to 367 form a PHD-type 2 zinc finger; sequence LICSLCKLKTGACIQCSVKNCTIPFHVTCAFEHSLEMKTILDEGDEVKFKSYCLKHS. Disordered regions lie at residues 630–654, 667–687, and 714–795; these read HGQSSNGKTKNEAEKSRQIKSNGIL, AASEKDPRSEISGKSQSSGFH, and FEKN…SVQR. Composition is skewed to polar residues over residues 678-687 and 720-732; these read SGKSQSSGFH and KSSGFSKPLSTER.

Belongs to the JADE family. In terms of assembly, component of the HBO1 complex.

Its function is as follows. Scaffold subunit of some HBO1 complexes, which have a histone H4 acetyltransferase activity. This chain is Protein Jade-3 (jade3), found in Danio rerio (Zebrafish).